Reading from the N-terminus, the 177-residue chain is 2''-aminoglycoside nucleotidyltransferase (177 aa).

Mg(2+) contacts are provided by Asp-44, Asp-46, and Asp-86. Asp-86 serves as the catalytic Proton acceptor.

Requires Mg(2+) as cofactor.

It catalyses the reaction nucleoside triphosphate + gentamicin = diphosphate + 2''-nucleotidylgentamicin.. In terms of biological role, mediates bacterial resistance to kanamycin, gentamicin, dibekacin, sisomicin, neomycin and tobramycin by adenylating the 2''-hydroxyl group of these antibiotics. This chain is 2''-aminoglycoside nucleotidyltransferase (aadB), found in Klebsiella pneumoniae.